The chain runs to 232 residues: Large ribosomal subunit protein uL1 (232 aa).

Belongs to the universal ribosomal protein uL1 family. In terms of assembly, part of the 50S ribosomal subunit.

Its function is as follows. Binds directly to 23S rRNA. The L1 stalk is quite mobile in the ribosome, and is involved in E site tRNA release. Functionally, protein L1 is also a translational repressor protein, it controls the translation of the L11 operon by binding to its mRNA. The chain is Large ribosomal subunit protein uL1 from Xanthobacter autotrophicus (strain ATCC BAA-1158 / Py2).